The primary structure comprises 122 residues: Large ribosomal subunit protein uL18 (122 aa).

The disordered stretch occupies residues 1-25 (MSTLSRKQQTQKRHRRLRRHLSGTA). Residues 9–21 (QTQKRHRRLRRHL) are compositionally biased toward basic residues.

The protein belongs to the universal ribosomal protein uL18 family. As to quaternary structure, part of the 50S ribosomal subunit; part of the 5S rRNA/L5/L18/L25 subcomplex. Contacts the 5S and 23S rRNAs.

This is one of the proteins that bind and probably mediate the attachment of the 5S RNA into the large ribosomal subunit, where it forms part of the central protuberance. This Synechococcus sp. (strain CC9311) protein is Large ribosomal subunit protein uL18.